The chain runs to 2408 residues: Protein ELYS (2408 aa).

The segment at 1–492 (MQNLEAQVTG…SGLIHFACTG (492 aa)) is seven-bladed beta propeller repeats. The disordered stretch occupies residues 1016–2408 (YSLPSLVWRE…AKPVTRRKMR (1393 aa)). The span at 1124-1145 (PLTSSDTDNNQTPHKSPLLKTS) shows a compositional bias: polar residues. Residues 1457 to 1466 (NDQDSEEIEE) show a composition bias toward acidic residues. 2 stretches are compositionally biased toward polar residues: residues 1705–1719 (INEGQVSPNRDQSTL) and 1735–1750 (PADSSTDIIGNITLPT). The segment covering 2136-2149 (QASKIQEDLSDTPR) has biased composition (basic and acidic residues). 2 sufficient for chromatin-binding regions span residues 2281–2359 (STQY…PVEI) and 2359–2408 (IKLI…RKMR). A sufficient to block nuclear pore assembly region spans residues 2281-2408 (STQYVFSPPS…AKPVTRRKMR (128 aa)). Positions 2329 to 2341 (SKPRGRPPKHKAK) form a DNA-binding region, a.T hook. The segment covering 2331 to 2348 (PRGRPPKHKAKAVTRVLK) has biased composition (basic residues). Residues 2378 to 2389 (DSTEAKGAEKIS) show a composition bias toward basic and acidic residues.

This sequence belongs to the ELYS family. Interacts with the Nup107-160 subcomplex of the NPC.

The protein localises to the nucleus. The protein resides in the nuclear pore complex. Its subcellular location is the cytoplasm. It is found in the nucleoplasm. In terms of biological role, required for the assembly of a functional nuclear pore complex (NPC) on the surface of chromosomes as nuclei form at the end of mitosis. May initiate NPC assembly by binding to chromatin and recruiting the Nup107-160 subcomplex, which may in turn recruit membrane vesicles containing pom121 and tmem48/ndc1. Association with chromatin may require the presence of the mcm2-mcm7 complex, suggesting a mechanism for coordination of nuclear assembly and the inactivation of replication licensing. This Xenopus laevis (African clawed frog) protein is Protein ELYS (ahctf1).